Reading from the N-terminus, the 315-residue chain is DNA-directed RNA polymerase subunit alpha (315 aa).

Positions 1-228 are alpha N-terminal domain (alpha-NTD); sequence MLEIEKPKIE…EHLRLFIGLT (228 aa). Positions 245–315 are alpha C-terminal domain (alpha-CTD); the sequence is KDKILEMTIE…LGLGFRKADD (71 aa).

It belongs to the RNA polymerase alpha chain family. Homodimer. The RNAP catalytic core consists of 2 alpha, 1 beta, 1 beta' and 1 omega subunit. When a sigma factor is associated with the core the holoenzyme is formed, which can initiate transcription.

The catalysed reaction is RNA(n) + a ribonucleoside 5'-triphosphate = RNA(n+1) + diphosphate. DNA-dependent RNA polymerase catalyzes the transcription of DNA into RNA using the four ribonucleoside triphosphates as substrates. This is DNA-directed RNA polymerase subunit alpha from Desulfitobacterium hafniense (strain DSM 10664 / DCB-2).